The chain runs to 144 residues: Ribonuclease H (144 aa).

An RNase H type-1 domain is found at 1-141 (MKKVEIFTDG…ADRLASEAAD (141 aa)). D9, E47, D69, and D133 together coordinate Mg(2+).

It belongs to the RNase H family. In terms of assembly, monomer. Mg(2+) serves as cofactor.

The protein resides in the cytoplasm. The catalysed reaction is Endonucleolytic cleavage to 5'-phosphomonoester.. Its function is as follows. Endonuclease that specifically degrades the RNA of RNA-DNA hybrids. This is Ribonuclease H from Erythrobacter litoralis (strain HTCC2594).